The primary structure comprises 863 residues: MLGGLKDKLTGKNGNKIKGLAVLMSRKLLDPRDFTASLLDNVHEVFGNSITCQLVSATVADQNNEGRGIVGSEANLEQGLTDLPSVSQGESKLTVRFNWEMDKHGVPGAIIIKNHHSTKFFLKTITLHDVPGCDTIVFVANSWIYPVGKYHYNRIFFANNSYLPSQMPEALRPYREDELRYLRGEDRQGPYQEHDRIYRYDVYNDLGEPDRDNPRPVLGGSQKHPYPRRGRTGRIPTKKDPNSESRLSLLEQIYVPSDERFAHLKMSDFAGYSIKAIVQGILPAIRTYVDLTPGEFDSFEDILKLYRGGLKLPSIPALEELRKSFPVQLIKDLLPVGGSYLLKFPKPDIIKENEVAWRTDEEFAREILAGLNPMVIRRLTEFPPKSTLDPSKYGDQTSTITPAHIEKNLEGLSVQQALDSNRLYILDHHDHFMPFLIDINSLDGIFTYATRTLLFLRDDDTLKPLAIELSLPHIEGNLTSAKSKVHTPASSGIESWVWQLAKAYVAVNDSGWHQLISHWLNTHAVMEPFVIATNRQLSVTHPVYKLLQPHYRDTMTINALARQTLINGGGIFEQTVFPGKHALAMSSAVYKNWNFTEQGLPDDLIKRGIAIKDPSSPSKVKLLIKDYPYATDGLAIWQAIEQWVTEYCAIYYPNDGVLQGDVELQAWWKEVREVGHGDLKDADWWPKMQSLPELTKACTTIIWIASALHAAVNFGQYPYAGYLPNRPTISRRPMPEPGSKEYTELDENPEKFFIRTITSQFQTILGVSLIEILSKHSADEIYLGQRDTPEWTSDPKALEAFKRFSRQLVEIESKVLNMNKDPLLKNRVGPANFPYTLMFPNTSDNKGAAEGITARGIPNSISI.

The 127-residue stretch at 32 to 158 folds into the PLAT domain; that stretch reads RDFTASLLDN…KYHYNRIFFA (127 aa). The Lipoxygenase domain occupies 161 to 863; the sequence is SYLPSQMPEA…ARGIPNSISI (703 aa). Positions 204 to 244 are disordered; sequence NDLGEPDRDNPRPVLGGSQKHPYPRRGRTGRIPTKKDPNSE. The Fe cation site is built by His-518, His-523, His-709, Asn-713, and Ile-863.

This sequence belongs to the lipoxygenase family. In terms of assembly, monomer. Fe cation is required as a cofactor.

Its subcellular location is the cytoplasm. The catalysed reaction is (9Z,12Z)-octadecadienoate + O2 = (9S)-hydroperoxy-(10E,12Z)-octadecadienoate. It functions in the pathway lipid metabolism; oxylipin biosynthesis. Plant lipoxygenase may be involved in a number of diverse aspects of plant physiology including growth and development, pest resistance, and senescence or responses to wounding. This lipoxygenase introduces molecular oxygen exclusively into the C-9 position of linoleic and linolenic. The sequence is that of Linoleate 9S-lipoxygenase 1 from Oryza sativa subsp. japonica (Rice).